The following is a 1294-amino-acid chain: uncharacterized protein (1294 aa).

Over 1-375 (MSQQENGDVA…RNFKLNFSDY (375 aa)) the chain is Extracellular. The ABC transporter 1 domain maps to 28–287 (LHVRDLSIVA…FESIGYHVPQ (260 aa)). Asn-41 is a glycosylation site (N-linked (GlcNAc...) asparagine). 62–69 (GGSGSGKT) lines the ATP pocket. N-linked (GlcNAc...) asparagine glycans are attached at residues Asn-86, Asn-101, Asn-151, Asn-341, Asn-349, and Asn-371. A helical transmembrane segment spans residues 376–396 (VTLISTFAEPLIIGTVCGWIY). Over 397-495 (YKPDKSSIGG…EADARKFFYQ (99 aa)) the chain is Cytoplasmic. A helical membrane pass occupies residues 496 to 516 (FAVVFLCQLSCSGLSMLSVAV). Topologically, residues 517 to 530 (SRDFSKASLVGNMT) are extracellular. N-linked (GlcNAc...) asparagine glycosylation occurs at Asn-528. The chain crosses the membrane as a helical span at residues 531 to 551 (FTVLSMGCGFFVNAKVMPVYV). Residues 552–604 (RWIKYIAFTWYSFGTLMSSTFTNSYCTTDNLDECLGNQILEVYGFPRNWITVP) are Cytoplasmic-facing. A helical membrane pass occupies residues 605–625 (AVVLLCWSVGYFVVGAIILYL). Topologically, residues 626–1038 (HKIDITLQNE…TTTRRSFDSL (413 aa)) are extracellular. The ABC transporter 2 domain maps to 679–941 (IKLEDIDLRV…FTELGYNCPS (263 aa)). ATP is bound at residue 727 to 734 (GPSGSGKS). The N-linked (GlcNAc...) asparagine glycan is linked to Asn-983. Residues 1039-1059 (MARIAQIPGLGVIFALFFAPV) traverse the membrane as a helical segment. The Cytoplasmic segment spans residues 1060–1120 (KHNYTSISNR…PFFLAYMTLE (61 aa)). A helical transmembrane segment spans residues 1121 to 1141 (LPLSALASVLYAVFTVLACGL). Residues 1142-1266 (PRTAGNFFAT…YGLVRNTQKY (125 aa)) are Extracellular-facing. The helical transmembrane segment at 1267-1287 (LGIIVCVAIIYRLIAFFILKA) threads the bilayer. Residues 1288 to 1294 (KLEWIKW) are Cytoplasmic-facing.

It belongs to the ABC transporter superfamily. ABCG family. PDR (TC 3.A.1.205) subfamily.

It localises to the membrane. This is an uncharacterized protein from Saccharomyces cerevisiae (strain ATCC 204508 / S288c) (Baker's yeast).